A 165-amino-acid polypeptide reads, in one-letter code: ATP synthase subunit b (165 aa).

A helical transmembrane segment spans residues 7–27 (STTIGDIIIVSGSVLLLFILI).

The protein belongs to the ATPase B chain family. As to quaternary structure, F-type ATPases have 2 components, F(1) - the catalytic core - and F(0) - the membrane proton channel. F(1) has five subunits: alpha(3), beta(3), gamma(1), delta(1), epsilon(1). F(0) has three main subunits: a(1), b(2) and c(10-14). The alpha and beta chains form an alternating ring which encloses part of the gamma chain. F(1) is attached to F(0) by a central stalk formed by the gamma and epsilon chains, while a peripheral stalk is formed by the delta and b chains.

The protein localises to the cell membrane. Its function is as follows. F(1)F(0) ATP synthase produces ATP from ADP in the presence of a proton or sodium gradient. F-type ATPases consist of two structural domains, F(1) containing the extramembraneous catalytic core and F(0) containing the membrane proton channel, linked together by a central stalk and a peripheral stalk. During catalysis, ATP synthesis in the catalytic domain of F(1) is coupled via a rotary mechanism of the central stalk subunits to proton translocation. Component of the F(0) channel, it forms part of the peripheral stalk, linking F(1) to F(0). The sequence is that of ATP synthase subunit b from Streptococcus agalactiae serotype Ia (strain ATCC 27591 / A909 / CDC SS700).